A 1464-amino-acid chain; its full sequence is Glutamate receptor ionotropic, NMDA 2A (1464 aa).

Positions 1 to 22 (MGRVGYWTLLVLPALLVWRGPA) are cleaved as a signal peptide. At 23-556 (PSAAAEKGPP…SAFLEPFSAS (534 aa)) the chain is on the extracellular side. Residue histidine 44 participates in Zn(2+) binding. The N-linked (GlcNAc...) asparagine glycan is linked to asparagine 75. Cysteine 87 and cysteine 320 form a disulfide bridge. Histidine 128, glutamate 266, and aspartate 282 together coordinate Zn(2+). 4 N-linked (GlcNAc...) asparagine glycosylation sites follow: asparagine 340, asparagine 380, asparagine 443, and asparagine 444. Intrachain disulfides connect cysteine 429-cysteine 455 and cysteine 436-cysteine 456. Residues serine 511, threonine 513, and arginine 518 each contribute to the L-glutamate site. An N-linked (GlcNAc...) asparagine glycan is attached at asparagine 541. Residues 557–576 (VWVMMFVMLLIVSAIAVFVF) form a helical membrane-spanning segment. At 577 to 600 (EYFSPVGYNRNLAKGKAPHGPSFT) the chain is on the cytoplasmic side. The interval 599 to 620 (FTIGKAIWLLWGLVFNNSVPVQ) is pore-forming. The discontinuously helical intramembrane region spans 601–615 (IGKAIWLLWGLVFNN). The Cytoplasmic portion of the chain corresponds to 616–625 (SVPVQNPKGT). Residues 626–646 (TSKIMVSVWAFFAVIFLASYT) traverse the membrane as a helical segment. The Extracellular segment spans residues 647-814 (ANLAAFMIQE…NEVMSSQLDI (168 aa)). An N-linked (GlcNAc...) asparagine glycan is attached at asparagine 687. L-glutamate is bound by residues serine 689, threonine 690, and aspartate 731. Cysteine 745 and cysteine 800 are oxidised to a cystine. Residues 815 to 835 (DNMAGVFYMLAAAMALSLITF) form a helical membrane-spanning segment. The Cytoplasmic segment spans residues 836 to 1464 (IWEHLFYWKL…KKMPSIESDV (629 aa)). 3 positions are modified to phosphoserine: serine 882, serine 890, and serine 929. Polar residues-rich tracts occupy residues 997–1010 (EVAVSTESKANSRP) and 1023–1032 (QDSLSQNPVS). The segment at 997-1083 (EVAVSTESKA…PDNSKNHKTK (87 aa)) is disordered. Phosphoserine is present on serine 1025. 2 stretches are compositionally biased toward basic and acidic residues: residues 1033 to 1043 (QRDEATAENRT) and 1052 to 1061 (LPEEMAHSDI). 2 positions are modified to phosphoserine: serine 1059 and serine 1062. Residues 1070–1083 (CHREPDNSKNHKTK) show a composition bias toward basic and acidic residues. A phosphoserine mark is found at serine 1198 and serine 1291. Positions 1335–1372 (KLSGKKSSLFPQGLEDSKRSKSLLPDHTSDNPFLHSHR) are disordered. Positions 1462–1464 (SDV) match the PDZ-binding motif.

Belongs to the glutamate-gated ion channel (TC 1.A.10.1) family. NR2A/GRIN2A subfamily. Heterotetramer. Forms heterotetrameric channels composed of two GluN1/zeta subunits (GRIN1), and two identical GluN2/epsilon subunits (GRIN2A, GRIN2B, GRIN2C or GRIN2D) or GluN3 subunits (GRIN3A or GRIN3B) (in vitro). Can also form heterotetrameric channels that contain at least two GluN1 subunits and at least two different GluN2 subunits (or a combination of one GluN2 and one GluN3 subunits) (in vitro). In vivo, the subunit composition may depend on the expression levels of the different subunits. Found in a complex with GRIN1, GRIN3A and PPP2CB. Found in a complex with GRIN1 and GRIN3B. Interacts with AIP1. Interacts with HIP1 and NETO1. Interacts with SNX27 (via PDZ domain); the interaction is required for recycling to the plasma membrane when endocytosed and prevent degradation in lysosomes. Interacts with PDZ domains of PATJ and DLG4. Interacts with LRFN2. Interacts with RPH3A and DLG4; this ternary complex regulates NMDA receptor composition at postsynaptic membranes. Interacts with SORCS2. Interacts with ARC; preventing ARC oligomerization. Interacts (via the extreme C-terminus) with FRMPD2 (the second PDZ domain); the interaction is direct and is likely to promote NMDAR-mediated neural signal transmission. GRIN2A binds FRMPD2 with lower affinity than GRIN2B.

The protein localises to the cell projection. It localises to the dendritic spine. It is found in the cell membrane. The protein resides in the synapse. Its subcellular location is the postsynaptic cell membrane. The protein localises to the cytoplasmic vesicle membrane. It carries out the reaction Ca(2+)(in) = Ca(2+)(out). It catalyses the reaction Na(+)(in) = Na(+)(out). The catalysed reaction is K(+)(in) = K(+)(out). NMDA glutamate receptor activity is inhibited by endogenous Mg(2+) in a voltage-dependent manner. NMDA glutamate receptor activity is inhibited by endogenous Zn(2+). NMDA glutamate receptor activity is inhibited by endogenous protons. Component of N-methyl-D-aspartate (NMDA) receptors (NMDARs) that function as heterotetrameric, ligand-gated cation channels with high calcium permeability and voltage-dependent block by Mg(2+). NMDARs participate in synaptic plasticity for learning and memory formation by contributing to the slow phase of excitatory postsynaptic current, long-term synaptic potentiation, and learning. Channel activation requires binding of the neurotransmitter L-glutamate to the GluN2 subunit, glycine or D-serine binding to the GluN1 subunit, plus membrane depolarization to eliminate channel inhibition by Mg(2+). NMDARs mediate simultaneously the potasium efflux and the influx of calcium and sodium. Each GluN2 subunit confers differential attributes to channel properties, including activation, deactivation and desensitization kinetics, pH sensitivity, Ca2(+) permeability, and binding to allosteric modulators. Participates in the synaptic plasticity regulation through activation by the L-glutamate releaseed by BEST1, into the synaptic cleft, upon F2R/PAR-1 activation in astrocyte. In Homo sapiens (Human), this protein is Glutamate receptor ionotropic, NMDA 2A.